The following is a 506-amino-acid chain: Maturase K (506 aa).

This sequence belongs to the intron maturase 2 family. MatK subfamily.

The protein localises to the plastid. Its subcellular location is the chloroplast. Its function is as follows. Usually encoded in the trnK tRNA gene intron. Probably assists in splicing its own and other chloroplast group II introns. In Rhododendron tomentosum (Marsh Labrador tea), this protein is Maturase K.